The following is a 125-amino-acid chain: MKEQTEVGKLKEGRYVVVEDEPCRIVSIATSKPGKHGAAKSRIDCIGIFDGVKRSIVQPVSAKTYVPIVERKMAQVISIAGTTVQLMDVKDFDMFELNVTEEQVAGLEPGKEIPYISSLGKKKLE.

A Hypusine modification is found at Lys35.

The protein belongs to the eIF-5A family.

The protein localises to the cytoplasm. In terms of biological role, functions by promoting the formation of the first peptide bond. The sequence is that of Translation initiation factor 5A (eIF5A) from Methanoculleus marisnigri (strain ATCC 35101 / DSM 1498 / JR1).